The primary structure comprises 490 residues: Glutamate--tRNA ligase (490 aa).

A 'HIGH' region motif is present at residues 13–23 (PSPTGTPHVGL). The short motif at 257–261 (KLSKR) is the 'KMSKS' region element. Lys-260 contacts ATP.

This sequence belongs to the class-I aminoacyl-tRNA synthetase family. Glutamate--tRNA ligase type 1 subfamily. As to quaternary structure, monomer.

It localises to the cytoplasm. It carries out the reaction tRNA(Glu) + L-glutamate + ATP = L-glutamyl-tRNA(Glu) + AMP + diphosphate. Functionally, catalyzes the attachment of glutamate to tRNA(Glu) in a two-step reaction: glutamate is first activated by ATP to form Glu-AMP and then transferred to the acceptor end of tRNA(Glu). The sequence is that of Glutamate--tRNA ligase from Mycobacterium bovis (strain BCG / Pasteur 1173P2).